Reading from the N-terminus, the 623-residue chain is V-type proton ATPase catalytic subunit A (623 aa).

Glycine 252–threonine 259 provides a ligand contact to ATP.

The protein belongs to the ATPase alpha/beta chains family. In terms of assembly, V-ATPase is a heteromultimeric enzyme composed of a peripheral catalytic V1 complex (components A to H) attached to an integral membrane V0 proton pore complex (components: a, c, c'', d and e). Binds to the deubiquitinating enzyme AMSH3.

Its subcellular location is the vacuole membrane. It catalyses the reaction ATP + H2O + 4 H(+)(in) = ADP + phosphate + 5 H(+)(out). Catalytic subunit of the peripheral V1 complex of vacuolar ATPase. V-ATPase vacuolar ATPase is responsible for acidifying a variety of intracellular compartments in eukaryotic cells. This Arabidopsis thaliana (Mouse-ear cress) protein is V-type proton ATPase catalytic subunit A (VHA-A).